We begin with the raw amino-acid sequence, 263 residues long: MYTKNLNSLEINEDYQYSRPIIKKPFRHITLTVPSSDIASFNEIFYLEPQYVAQALRLTNTFQAAIDPLTLNFDFEKALQIANGLPNAGITGTLNQSVIQQTIEISVMISQIKEIIRNVLGLVINSTNFWNSVLAAITNTFTNLEPQVDENWIVWRNLSATHTSYYYKILFSIQNEDTGAFMAVLPIAFEITVDVQKQQLLFITIRDSARYEVKMKALTVVQLLDSYNAPIIDVFNVHNYGLYQSNHPNHHILQNLNLNKIKG.

The protein belongs to the cyt1/cyt2 endotoxin family. Post-translationally, active after proteolytic processing.

Kills the larvae of dipteran insects by making pores in the epithelial cell membrane of the insect midgut. In Bacillus thuringiensis subsp. jegathesan, this protein is Type-2Bb cytolytic delta-endotoxin (cyt2Bb1).